A 414-amino-acid chain; its full sequence is Enterobactin exporter EntS (414 aa).

The Cytoplasmic portion of the chain corresponds to 1-21; sequence MNRQSWLLNLSLLKTHPAFRA. The chain crosses the membrane as a helical span at residues 22–42; that stretch reads VFLARFISIVSLGLLGVAVPV. Residues 43-55 are Periplasmic-facing; the sequence is QIQMMTHSTWQVG. The chain crosses the membrane as a helical span at residues 56–76; that stretch reads LSVTLTGGAMFIGLMVGGVLA. Over 77–83 the chain is Cytoplasmic; that stretch reads DRYERKK. A helical membrane pass occupies residues 84-104; sequence VILLARGTCGIGFIGLCVNAL. Over 105-109 the chain is Periplasmic; it reads LPEPS. Residues 110–130 traverse the membrane as a helical segment; that stretch reads LLAIYLLGLWDGFFASLGVTA. Residues 131–156 are Cytoplasmic-facing; it reads LLAATPALVGRENLMQAGAITMLTVR. A helical transmembrane segment spans residues 157 to 177; it reads LGSVISPMLGGILLASGGVAW. Position 178 (Asn178) is a topological domain, periplasmic. A helical transmembrane segment spans residues 179-199; that stretch reads YGLAAAGTFITLLPLLTLPRL. Residues 200–218 are Cytoplasmic-facing; sequence PVPPQPRENPFIALLAAFR. The helical transmembrane segment at 219-239 threads the bilayer; it reads FLLASPLIGGIALLGGLVTMA. Topologically, residues 240–256 are periplasmic; sequence SAVRVLYPALAMSWQMS. The chain crosses the membrane as a helical span at residues 257–277; it reads AAQIGLLYAAIPLGAAIGALT. The Cytoplasmic portion of the chain corresponds to 278 to 287; the sequence is SGQLAHSVRP. Residues 288–307 traverse the membrane as a helical segment; the sequence is GLIMLVSTVGSFLAVGLFAI. Topologically, residues 308–313 are periplasmic; that stretch reads MPIWIA. Residues 314-336 form a helical membrane-spanning segment; that stretch reads GVICLALFGWLSAISSLLQYTLL. The Cytoplasmic segment spans residues 337 to 356; that stretch reads QTQTPENMLGRMNGLWTAQN. Residues 357–377 traverse the membrane as a helical segment; the sequence is VTGDAIGAALLGGLGAMMTPV. A topological domain (periplasmic) is located at residue Ala378. Residues 379-399 traverse the membrane as a helical segment; that stretch reads SASVSGFGLVIIGLLLLLVLG. Topologically, residues 400–414 are cytoplasmic; it reads ELRRFRQTPPVSDAG.

It belongs to the major facilitator superfamily. EntS (TC 2.A.1.38) family.

It is found in the cell inner membrane. In terms of biological role, component of an export pathway for enterobactin. In Salmonella typhi, this protein is Enterobactin exporter EntS.